The chain runs to 384 residues: Deoxyguanosinetriphosphate triphosphohydrolase-like protein (384 aa).

The interval 13–42 (LASYASDPSKTRGRRHSEPPPENRTEFQRD) is disordered. A compositionally biased stretch (basic and acidic residues) spans 28-42 (HSEPPPENRTEFQRD). The HD domain occupies 73–208 (RLTHSLEVAQ…ANLADEVAYN (136 aa)).

Belongs to the dGTPase family. Type 2 subfamily.

This chain is Deoxyguanosinetriphosphate triphosphohydrolase-like protein, found in Bordetella bronchiseptica (strain ATCC BAA-588 / NCTC 13252 / RB50) (Alcaligenes bronchisepticus).